The following is a 207-amino-acid chain: Small ribosomal subunit protein uS4 (207 aa).

The 61-residue stretch at Arg96–Ala156 folds into the S4 RNA-binding domain.

This sequence belongs to the universal ribosomal protein uS4 family. As to quaternary structure, part of the 30S ribosomal subunit. Contacts protein S5. The interaction surface between S4 and S5 is involved in control of translational fidelity.

Functionally, one of the primary rRNA binding proteins, it binds directly to 16S rRNA where it nucleates assembly of the body of the 30S subunit. Its function is as follows. With S5 and S12 plays an important role in translational accuracy. The sequence is that of Small ribosomal subunit protein uS4 from Leptospira interrogans serogroup Icterohaemorrhagiae serovar copenhageni (strain Fiocruz L1-130).